Consider the following 184-residue polypeptide: Chaperone protein YcdY (184 aa).

It belongs to the TorD/DmsD family. In terms of assembly, interacts with YcdX.

Its function is as follows. Acts as a chaperone that increases YcdX activity, maybe by facilitating the correct insertion of the zinc ions into the catalytic site of YcdX. Involved in the swarming motility process. This is Chaperone protein YcdY (ycdY) from Escherichia coli (strain K12).